The primary structure comprises 359 residues: Phospho-N-acetylmuramoyl-pentapeptide-transferase (359 aa).

Helical transmembrane passes span 3–23, 53–73, 84–104, 117–137, 156–176, 187–207, 231–251, 255–275, 283–303, and 330–350; these read QILFAAGIALAVSILLTPVLI, GGVAILAGLWAGYWGSHLIGI, GLLVLGLTTALGGVGFLDDFI, TAKLVGQLIAAVAFGILALQF, IATVTMGSVVFVAFCYLLVSA, LDGLAAGSMSLVLGAYVIITF, LALICAAGAGACIGFLWWNAA, IFMGDTGSLALGGMLAGLSIT, VVIGALFVAEAASVVIQVAVF, and VIIRFWLLAAIASAIGLALFY.

This sequence belongs to the glycosyltransferase 4 family. MraY subfamily. Mg(2+) serves as cofactor.

The protein localises to the cell membrane. It catalyses the reaction UDP-N-acetyl-alpha-D-muramoyl-L-alanyl-gamma-D-glutamyl-meso-2,6-diaminopimeloyl-D-alanyl-D-alanine + di-trans,octa-cis-undecaprenyl phosphate = di-trans,octa-cis-undecaprenyl diphospho-N-acetyl-alpha-D-muramoyl-L-alanyl-D-glutamyl-meso-2,6-diaminopimeloyl-D-alanyl-D-alanine + UMP. It functions in the pathway cell wall biogenesis; peptidoglycan biosynthesis. Functionally, catalyzes the initial step of the lipid cycle reactions in the biosynthesis of the cell wall peptidoglycan: transfers peptidoglycan precursor phospho-MurNAc-pentapeptide from UDP-MurNAc-pentapeptide onto the lipid carrier undecaprenyl phosphate, yielding undecaprenyl-pyrophosphoryl-MurNAc-pentapeptide, known as lipid I. The sequence is that of Phospho-N-acetylmuramoyl-pentapeptide-transferase from Rhodococcus opacus (strain B4).